A 322-amino-acid polypeptide reads, in one-letter code: Cysteine protease yopT1 (322 aa).

The tract at residues 42–69 (LSHSNRQKKLSATIKHNQSSRSMLDRKL) is disordered. Residues Cys-139, His-258, and Asp-274 contribute to the active site.

The protein belongs to the peptidase C58 family. In terms of assembly, interacts with human ARHA.

Its subcellular location is the secreted. Its function is as follows. Cysteine protease, which is translocated into infected cells and plays a central role in pathogenesis by cleaving the C-terminus end of the human small GTPase RhoA/ARHA, a regulator of cytoskeleton. Once cleaved, ARHA loses its lipid modification, and is released from the cell membrane, leading to the subsequent disruption of actin cytoskeleton of the host cell. This is Cysteine protease yopT1 (yopT1) from Yersinia enterocolitica serotype O:8 / biotype 1B (strain NCTC 13174 / 8081).